A 211-amino-acid polypeptide reads, in one-letter code: uncharacterized protein (211 aa).

This is an uncharacterized protein from Acidianus convivator (ATV).